Consider the following 123-residue polypeptide: Small ribosomal subunit protein uS12 (123 aa).

Position 89 is a 3-methylthioaspartic acid (D89). The segment at 104-123 is disordered; it reads TAGVKDRKQARSKYGAKRPK. Residues 113–123 show a composition bias toward basic residues; sequence ARSKYGAKRPK.

It belongs to the universal ribosomal protein uS12 family. As to quaternary structure, part of the 30S ribosomal subunit. Contacts proteins S8 and S17. May interact with IF1 in the 30S initiation complex.

With S4 and S5 plays an important role in translational accuracy. In terms of biological role, interacts with and stabilizes bases of the 16S rRNA that are involved in tRNA selection in the A site and with the mRNA backbone. Located at the interface of the 30S and 50S subunits, it traverses the body of the 30S subunit contacting proteins on the other side and probably holding the rRNA structure together. The combined cluster of proteins S8, S12 and S17 appears to hold together the shoulder and platform of the 30S subunit. This Neisseria meningitidis serogroup C (strain 053442) protein is Small ribosomal subunit protein uS12.